Consider the following 158-residue polypeptide: MFRPILILTILSCVLAYHQYRELKCSTPTNSIRGGPDRAECHLVLKAEELETGRPVPTGLGCWQEDHDGEEREYCDIVCPKSHTVFISYIDQGHRACFNFITYQVEKRNDEHVLWRSGKCLNSTVNYRIGCKFDDPFETQFKSDNEIFAHLRARARRV.

An N-terminal signal peptide occupies residues 1–16; it reads MFRPILILTILSCVLA. Residue Asn-122 is glycosylated (N-linked (GlcNAc...) asparagine).

This is an uncharacterized protein from Caenorhabditis elegans.